The primary structure comprises 156 residues: ATP synthase subunit b (156 aa).

A helical transmembrane segment spans residues 7–29 (LLGQAISFALFVWFCMKYVWPPL).

The protein belongs to the ATPase B chain family. As to quaternary structure, F-type ATPases have 2 components, F(1) - the catalytic core - and F(0) - the membrane proton channel. F(1) has five subunits: alpha(3), beta(3), gamma(1), delta(1), epsilon(1). F(0) has three main subunits: a(1), b(2) and c(10-14). The alpha and beta chains form an alternating ring which encloses part of the gamma chain. F(1) is attached to F(0) by a central stalk formed by the gamma and epsilon chains, while a peripheral stalk is formed by the delta and b chains.

Its subcellular location is the cell inner membrane. Functionally, f(1)F(0) ATP synthase produces ATP from ADP in the presence of a proton or sodium gradient. F-type ATPases consist of two structural domains, F(1) containing the extramembraneous catalytic core and F(0) containing the membrane proton channel, linked together by a central stalk and a peripheral stalk. During catalysis, ATP synthesis in the catalytic domain of F(1) is coupled via a rotary mechanism of the central stalk subunits to proton translocation. Component of the F(0) channel, it forms part of the peripheral stalk, linking F(1) to F(0). This is ATP synthase subunit b from Vibrio parahaemolyticus serotype O3:K6 (strain RIMD 2210633).